A 190-amino-acid chain; its full sequence is Potassium-transporting ATPase KdpC subunit (190 aa).

A helical transmembrane segment spans residues threonine 10 to glycine 30.

Belongs to the KdpC family. As to quaternary structure, the system is composed of three essential subunits: KdpA, KdpB and KdpC.

Its subcellular location is the cell inner membrane. In terms of biological role, part of the high-affinity ATP-driven potassium transport (or Kdp) system, which catalyzes the hydrolysis of ATP coupled with the electrogenic transport of potassium into the cytoplasm. This subunit acts as a catalytic chaperone that increases the ATP-binding affinity of the ATP-hydrolyzing subunit KdpB by the formation of a transient KdpB/KdpC/ATP ternary complex. The sequence is that of Potassium-transporting ATPase KdpC subunit from Escherichia coli O7:K1 (strain IAI39 / ExPEC).